We begin with the raw amino-acid sequence, 990 residues long: Serine/threonine-protein kinase ATG1 (990 aa).

Residues 15–334 (FVIENEIGKG…FDDFFASPVI (320 aa)) enclose the Protein kinase domain. ATP-binding positions include 21 to 29 (IGKGSFAVV) and K44. Catalysis depends on D165, which acts as the Proton acceptor. The segment covering 375 to 408 (VSSIEASTQQPGVQPPVSTATSPPALESRSTQEA) has biased composition (polar residues). Disordered regions lie at residues 375–499 (VSSI…GGED), 529–566 (SRLG…TILS), 579–614 (ASTG…QGGQ), 750–784 (LSQE…SSSS), and 970–990 (SPVG…TESP). 2 stretches are compositionally biased toward low complexity: residues 529–554 (SRLG…SAPG) and 587–613 (PPGS…RQGG). Residues 750–771 (LSQELDSSTATSGISPSRNSVQ) are compositionally biased toward polar residues. A compositionally biased stretch (low complexity) spans 772–784 (GSARRVGSISSSS).

This sequence belongs to the protein kinase superfamily. Ser/Thr protein kinase family. APG1/unc-51/ULK1 subfamily. Homodimer. Forms a ternary complex with ATG13 and ATG17.

The protein resides in the cytoplasm. It is found in the preautophagosomal structure membrane. It catalyses the reaction L-seryl-[protein] + ATP = O-phospho-L-seryl-[protein] + ADP + H(+). It carries out the reaction L-threonyl-[protein] + ATP = O-phospho-L-threonyl-[protein] + ADP + H(+). Serine/threonine protein kinase involved in the cytoplasm to vacuole transport (Cvt) and found to be essential in autophagy, where it is required for the formation of autophagosomes. Involved in the clearance of protein aggregates which cannot be efficiently cleared by the proteasome. Required for selective autophagic degradation of the nucleus (nucleophagy) as well as for mitophagy which contributes to regulate mitochondrial quantity and quality by eliminating the mitochondria to a basal level to fulfill cellular energy requirements and preventing excess ROS production. Also involved in endoplasmic reticulum-specific autophagic process, in selective removal of ER-associated degradation (ERAD) substrates. Plays a key role in ATG9 and ATG23 cycling through the pre-autophagosomal structure and is necessary to promote ATG18 binding to ATG9 through phosphorylation of ATG9. Catalyzes phosphorylation of ATG4, decreasing the interaction between ATG4 and ATG8 and impairing deconjugation of PE-conjugated forms of ATG8. Required for wild-type budding of haploid sporidia and for complete symptom development during pathogenic growth such as gall formation and teliospore production in ears of mature maize. The protein is Serine/threonine-protein kinase ATG1 of Mycosarcoma maydis (Corn smut fungus).